The primary structure comprises 179 residues: uncharacterized protein (179 aa).

Residues 160–179 are disordered; that stretch reads QPIEPNGTQPATETKTPVGV. Positions 165 to 179 are enriched in polar residues; it reads NGTQPATETKTPVGV.

It belongs to the Dps family.

This is an uncharacterized protein from Anabaena variabilis.